The chain runs to 149 residues: Large ribosomal subunit protein uL13 (149 aa).

This sequence belongs to the universal ribosomal protein uL13 family. As to quaternary structure, part of the 50S ribosomal subunit.

Its function is as follows. This protein is one of the early assembly proteins of the 50S ribosomal subunit, although it is not seen to bind rRNA by itself. It is important during the early stages of 50S assembly. This Borrelia recurrentis (strain A1) protein is Large ribosomal subunit protein uL13.